The chain runs to 419 residues: rRNA methyltransferase 3, mitochondrial (419 aa).

The transit peptide at 1-39 directs the protein to the mitochondrion; that stretch reads MAALCGGMLRGCILKPLGLSGSLQLKRNVRALRRTPVRV. Residues 42–68 are disordered; sequence ADEEGRERKQVEASRQRQPRQNESQAC. Positions 44–56 are enriched in basic and acidic residues; that stretch reads EEGRERKQVEASR. Glycine 357, isoleucine 381, and leucine 390 together coordinate S-adenosyl-L-methionine.

This sequence belongs to the class IV-like SAM-binding methyltransferase superfamily. RNA methyltransferase TrmH family.

It is found in the mitochondrion. It catalyses the reaction a uridine in rRNA + S-adenosyl-L-methionine = a 2'-O-methyluridine in rRNA + S-adenosyl-L-homocysteine + H(+). Its function is as follows. S-adenosyl-L-methionine-dependent 2'-O-ribose methyltransferase that catalyzes the formation of 2'-O-methylguanosine at position 1370 (Gm1370) in the mitochondrial large subunit ribosomal RNA (mtLSU rRNA), a conserved modification in the peptidyl transferase domain of the mtLSU rRNA. Also required for formation of 2'-O-methyluridine at position 1369 (Um1369) mediated by MRM2. The sequence is that of rRNA methyltransferase 3, mitochondrial from Xenopus laevis (African clawed frog).